A 201-amino-acid polypeptide reads, in one-letter code: Sorting nexin-10 (201 aa).

The interval 8-125 is required for interaction with ATP6V1D; that stretch reads EEFVSVWVRD…SLHLFLQSHL (118 aa). Residues 10 to 127 form the PX domain; the sequence is FVSVWVRDPR…HLFLQSHLNS (118 aa). The a 1,2-diacyl-sn-glycero-3-phospho-(1D-myo-inositol-3-phosphate) site is built by Arg-53, Lys-79, and Arg-94. The segment at 156-201 is disordered; it reads FPEEDEEGKKENDIDYDSESSSSGLGHSSDDSSSHGCKVNTAPQES.

It belongs to the sorting nexin family. As to quaternary structure, interacts with ATP6V1D; may play a role in ciliogenesis.

It is found in the cytoplasm. Its subcellular location is the endosome membrane. It localises to the cytoskeleton. The protein resides in the microtubule organizing center. The protein localises to the centrosome. In terms of biological role, probable phosphoinositide-binding protein involved in protein sorting and membrane trafficking in endosomes. Plays a role in cilium biogenesis through regulation of the transport and the localization of proteins to the cilium. Required for the localization to the cilium of V-ATPase subunit ATP6V1D and ATP6V0D1, and RAB8A. Involved in osteoclast differentiation and therefore bone resorption. This is Sorting nexin-10 (SNX10) from Homo sapiens (Human).